The sequence spans 289 residues: Early E4 34 kDa protein (289 aa).

Belongs to the adenoviridae E4 30 to 34 kDa protein family. As to quaternary structure, interacts with E1B-55k.

The protein resides in the host nucleus. It is found in the host cytoplasm. In terms of biological role, plays a major role to prevent cellular inhibition of viral genome replication by nuclear bodies. Assembles an SCF-like E3 ubiquitin ligase complex based on the cellular proteins ELOB, ELOC, CUL5 and RBX1, in cooperation with viral E1B-55K. This viral RING-type ligase ubiquitinates cellular substrates prior to proteasomal degradation: p53/TP53, LIG4, MRE11-RAD50-NBS1 (MRN) complex, ITGA3, DAXX and BLM. This is Early E4 34 kDa protein from Human adenovirus F serotype 40 (HAdV-40).